Here is a 228-residue protein sequence, read N- to C-terminus: Orotate phosphoribosyltransferase (228 aa).

K26 serves as a coordination point for 5-phospho-alpha-D-ribose 1-diphosphate. F34–F35 is an orotate binding site. 5-phospho-alpha-D-ribose 1-diphosphate-binding positions include Y72–K73, R98, K99, K102, H104, and D123–S131. Orotate-binding residues include S127 and R155.

The protein belongs to the purine/pyrimidine phosphoribosyltransferase family. PyrE subfamily. As to quaternary structure, homodimer. Mg(2+) serves as cofactor.

It catalyses the reaction orotidine 5'-phosphate + diphosphate = orotate + 5-phospho-alpha-D-ribose 1-diphosphate. The protein operates within pyrimidine metabolism; UMP biosynthesis via de novo pathway; UMP from orotate: step 1/2. Its function is as follows. Catalyzes the transfer of a ribosyl phosphate group from 5-phosphoribose 1-diphosphate to orotate, leading to the formation of orotidine monophosphate (OMP). The polypeptide is Orotate phosphoribosyltransferase (Nitrosospira multiformis (strain ATCC 25196 / NCIMB 11849 / C 71)).